The primary structure comprises 292 residues: Phosphatidylglycerol--prolipoprotein diacylglyceryl transferase (292 aa).

Transmembrane regions (helical) follow at residues 18–38 (LFGATFALRWYALAYIAGLLI), 67–87 (LLTWVILGVILGGRLGFVLFY), 105–125 (GGMSFHGGFLGVMVAVIAFCL), and 129–149 (ISILPVADLLAAATPPGLFLG). Arginine 150 contributes to the a 1,2-diacyl-sn-glycero-3-phospho-(1'-sn-glycerol) binding site. Helical transmembrane passes span 193 to 213 (QLYEAALEGIVLFAILAILIW), 222 to 242 (GAVTGAFLAGYGCARFLVEFV), and 266 to 286 (GLTMGQILSLPMILLGLYFML).

This sequence belongs to the Lgt family.

It localises to the cell inner membrane. It carries out the reaction L-cysteinyl-[prolipoprotein] + a 1,2-diacyl-sn-glycero-3-phospho-(1'-sn-glycerol) = an S-1,2-diacyl-sn-glyceryl-L-cysteinyl-[prolipoprotein] + sn-glycerol 1-phosphate + H(+). It participates in protein modification; lipoprotein biosynthesis (diacylglyceryl transfer). Its function is as follows. Catalyzes the transfer of the diacylglyceryl group from phosphatidylglycerol to the sulfhydryl group of the N-terminal cysteine of a prolipoprotein, the first step in the formation of mature lipoproteins. This Cereibacter sphaeroides (strain ATCC 17025 / ATH 2.4.3) (Rhodobacter sphaeroides) protein is Phosphatidylglycerol--prolipoprotein diacylglyceryl transferase.